Here is a 413-residue protein sequence, read N- to C-terminus: Arginine biosynthesis bifunctional protein ArgJ (413 aa).

Threonine 158, lysine 184, threonine 195, glutamate 285, asparagine 408, and serine 413 together coordinate substrate. Catalysis depends on threonine 195, which acts as the Nucleophile.

The protein belongs to the ArgJ family. As to quaternary structure, heterotetramer of two alpha and two beta chains.

The protein resides in the cytoplasm. The enzyme catalyses N(2)-acetyl-L-ornithine + L-glutamate = N-acetyl-L-glutamate + L-ornithine. It catalyses the reaction L-glutamate + acetyl-CoA = N-acetyl-L-glutamate + CoA + H(+). Its pathway is amino-acid biosynthesis; L-arginine biosynthesis; L-ornithine and N-acetyl-L-glutamate from L-glutamate and N(2)-acetyl-L-ornithine (cyclic): step 1/1. It participates in amino-acid biosynthesis; L-arginine biosynthesis; N(2)-acetyl-L-ornithine from L-glutamate: step 1/4. Catalyzes two activities which are involved in the cyclic version of arginine biosynthesis: the synthesis of N-acetylglutamate from glutamate and acetyl-CoA as the acetyl donor, and of ornithine by transacetylation between N(2)-acetylornithine and glutamate. The polypeptide is Arginine biosynthesis bifunctional protein ArgJ (Brucella suis biovar 1 (strain 1330)).